The sequence spans 574 residues: C6 finger transcription factor poxB (574 aa).

The zn(2)-C6 fungal-type DNA-binding region spans 19–51; that stretch reads CDRCRGQKLRCERPVSNSSTTPCRRCLKAHVRC. Disordered stretches follow at residues 111 to 133, 242 to 262, and 376 to 404; these read PRRLSHSSSMANPVDSRPPGRTR, SSLQSSRGLNGFETPQRESRH, and LNQTGSHAPSSPLGGNPLPPLSGPLSASA.

Its subcellular location is the nucleus. Transcription factor that positively regulates the expression of the gene cluster that mediates the biosynthesis of oxaleimides, cytotoxic compounds containing an unusual disubstituted succinimide moiety. The polypeptide is C6 finger transcription factor poxB (Penicillium oxalicum).